Reading from the N-terminus, the 106-residue chain is Protein translocase subunit SecE (106 aa).

2 helical membrane-spanning segments follow: residues 20-40 (LPIRVIGMAIALVIAFILAAI) and 75-95 (IVIGVTMIASLFFWAVDSIIV).

This sequence belongs to the SecE/SEC61-gamma family. Component of the Sec protein translocase complex. Heterotrimer consisting of SecY, SecE and SecG subunits. The heterotrimers can form oligomers, although 1 heterotrimer is thought to be able to translocate proteins. Interacts with the ribosome. Interacts with SecDF, and other proteins may be involved. Interacts with SecA.

The protein localises to the cell inner membrane. Its function is as follows. Essential subunit of the Sec protein translocation channel SecYEG. Clamps together the 2 halves of SecY. May contact the channel plug during translocation. This is Protein translocase subunit SecE from Haemophilus influenzae (strain ATCC 51907 / DSM 11121 / KW20 / Rd).